The primary structure comprises 1116 residues: Probable chitinase LysM11 (1116 aa).

In terms of domain architecture, LysM spans 233–283; it reads GTYTIQTNDNCAEIAAHFGVTQDDIYDLNEDTWGWAGCGTNDLKADQVICL. The GH18 domain maps to 346–719; it reads FYHVAYFEVF…LGVDPDSDEA (374 aa). Residue Glu-466 is the Proton donor of the active site. The chitin site is built by Tyr-467 and Trp-701.

It belongs to the glycosyl hydrolase 18 family. Chitinase class V subfamily.

The catalysed reaction is Random endo-hydrolysis of N-acetyl-beta-D-glucosaminide (1-&gt;4)-beta-linkages in chitin and chitodextrins.. Its function is as follows. Probable chitinase involved in the degradation of chitin, a component of the cell walls of fungi and exoskeletal elements of some animals (including worms and arthropods). Might be involved in manipulation of host defenses for successful infection. This is Probable chitinase LysM11 from Penicillium expansum (Blue mold rot fungus).